We begin with the raw amino-acid sequence, 223 residues long: Translation initiation factor 6 (223 aa).

It belongs to the eIF-6 family.

Its function is as follows. Binds to the 50S ribosomal subunit and prevents its association with the 30S ribosomal subunit to form the 70S initiation complex. The chain is Translation initiation factor 6 from Sulfolobus acidocaldarius (strain ATCC 33909 / DSM 639 / JCM 8929 / NBRC 15157 / NCIMB 11770).